The sequence spans 169 residues: Nicotinamide-nucleotide adenylyltransferase (169 aa).

This sequence belongs to the archaeal NMN adenylyltransferase family.

The protein localises to the cytoplasm. It carries out the reaction beta-nicotinamide D-ribonucleotide + ATP + H(+) = diphosphate + NAD(+). Its pathway is cofactor biosynthesis; NAD(+) biosynthesis; NAD(+) from nicotinamide D-ribonucleotide: step 1/1. The chain is Nicotinamide-nucleotide adenylyltransferase from Picrophilus torridus (strain ATCC 700027 / DSM 9790 / JCM 10055 / NBRC 100828 / KAW 2/3).